Here is a 447-residue protein sequence, read N- to C-terminus: C4-dicarboxylate transport protein (447 aa).

Transmembrane regions (helical) follow at residues 22–42 (FQVIVAIVLGAILGHYEPLVG), 52–72 (FINLVKMIIAPVIFLTIVTGI), 90–110 (AYFLFFSTLALIVGMIVAHVV), 159–179 (GNILQVLFIAVLFGIALASVG), 199–219 (LVHILMKAAPIGAFGAIAFTI), 232–252 (WLVGSFYLTAFLFVAVILGVV), 325–347 (LFIAQATNTELTLGHQIALLLVA), and 366–386 (AATLAVVPEVPVAGMALILGV).

It belongs to the dicarboxylate/amino acid:cation symporter (DAACS) (TC 2.A.23) family.

The protein localises to the cell inner membrane. Functionally, responsible for the transport of dicarboxylates such as succinate, fumarate, and malate from the periplasm across the membrane. This chain is C4-dicarboxylate transport protein, found in Stenotrophomonas maltophilia (strain R551-3).